The chain runs to 330 residues: tRNA dimethylallyltransferase (330 aa).

Positions 1 to 11 are enriched in polar residues; that stretch reads MDYSHSDSPST. The tract at residues 1–21 is disordered; it reads MDYSHSDSPSTAPAGKTPVDQ. ATP is bound at residue 29-36; the sequence is GPTGAGKS. Position 31–36 (31–36) interacts with substrate; the sequence is TGAGKS. The tract at residues 56–59 is interaction with substrate tRNA; sequence DSMQ.

Belongs to the IPP transferase family. As to quaternary structure, monomer. Requires Mg(2+) as cofactor.

It catalyses the reaction adenosine(37) in tRNA + dimethylallyl diphosphate = N(6)-dimethylallyladenosine(37) in tRNA + diphosphate. Functionally, catalyzes the transfer of a dimethylallyl group onto the adenine at position 37 in tRNAs that read codons beginning with uridine, leading to the formation of N6-(dimethylallyl)adenosine (i(6)A). The sequence is that of tRNA dimethylallyltransferase from Corynebacterium urealyticum (strain ATCC 43042 / DSM 7109).